The chain runs to 58 residues: Ribosome modulation factor (58 aa).

This sequence belongs to the ribosome modulation factor family.

It is found in the cytoplasm. In terms of biological role, during stationary phase, converts 70S ribosomes to an inactive dimeric form (100S ribosomes). In Tolumonas auensis (strain DSM 9187 / NBRC 110442 / TA 4), this protein is Ribosome modulation factor.